A 67-amino-acid chain; its full sequence is uncharacterized protein (67 aa).

This sequence belongs to the baculoviridae 8 kDa protein family.

This is an uncharacterized protein from Autographa californica nuclear polyhedrosis virus (AcMNPV).